We begin with the raw amino-acid sequence, 245 residues long: MSQSGSVLRRNGFTFKQFFVAHDRCAMKVGTDGILLGAWAPVADVKRILDIGTGSGLLALMLAQRTDDSVPVDAVELDAGAAMQAQENVAHSPWPHRITVHTDDIQRWAPRQTVRFDLIISNPPYYEPGVECSTPQREQARYTATLDHQTLLAIAADCITEDGFFCVVLPEQIGNAFTQQALNMGWHLRLRTDVAENEARLPHRVLLAFSPQAGECFSDRLVIRGSDQNYSESYTALTQAFYLFM.

It belongs to the methyltransferase superfamily. tRNA (adenine-N(6)-)-methyltransferase family.

The protein localises to the cytoplasm. The catalysed reaction is adenosine(37) in tRNA1(Val) + S-adenosyl-L-methionine = N(6)-methyladenosine(37) in tRNA1(Val) + S-adenosyl-L-homocysteine + H(+). Specifically methylates the adenine in position 37 of tRNA(1)(Val) (anticodon cmo5UAC). In Salmonella typhi, this protein is tRNA1(Val) (adenine(37)-N6)-methyltransferase.